The primary structure comprises 194 residues: Peptidyl-tRNA hydrolase (194 aa).

Tyr17 serves as a coordination point for tRNA. The active-site Proton acceptor is the His22. TRNA-binding residues include Tyr68, Asn70, and Asn116.

The protein belongs to the PTH family. As to quaternary structure, monomer.

It is found in the cytoplasm. It catalyses the reaction an N-acyl-L-alpha-aminoacyl-tRNA + H2O = an N-acyl-L-amino acid + a tRNA + H(+). Its function is as follows. Hydrolyzes ribosome-free peptidyl-tRNAs (with 1 or more amino acids incorporated), which drop off the ribosome during protein synthesis, or as a result of ribosome stalling. Catalyzes the release of premature peptidyl moieties from peptidyl-tRNA molecules trapped in stalled 50S ribosomal subunits, and thus maintains levels of free tRNAs and 50S ribosomes. This is Peptidyl-tRNA hydrolase from Pseudomonas syringae pv. tomato (strain ATCC BAA-871 / DC3000).